Reading from the N-terminus, the 86-residue chain is MANIKSQIKRNKQNEKRHERNKAVKTGLKTAVRKFREAAEAGDKDTAVALGQDAARKLDKAASKGVIHKNQAANRKSAIAKKAASL.

Residues 1 to 25 (MANIKSQIKRNKQNEKRHERNKAVK) are disordered. Residues 12 to 22 (KQNEKRHERNK) are compositionally biased toward basic and acidic residues.

Belongs to the bacterial ribosomal protein bS20 family.

Its function is as follows. Binds directly to 16S ribosomal RNA. In Nocardioides sp. (strain ATCC BAA-499 / JS614), this protein is Small ribosomal subunit protein bS20.